Here is a 211-residue protein sequence, read N- to C-terminus: Cytochrome c biogenesis ATP-binding export protein CcmA 2 (211 aa).

In terms of domain architecture, ABC transporter spans 6 to 208 (LEARELGVRR…GAVLDLATDA (203 aa)). 38–45 (GPNGAGKT) is a binding site for ATP.

This sequence belongs to the ABC transporter superfamily. CcmA exporter (TC 3.A.1.107) family. As to quaternary structure, the complex is composed of two ATP-binding proteins (CcmA) and two transmembrane proteins (CcmB).

The protein localises to the cell inner membrane. The enzyme catalyses heme b(in) + ATP + H2O = heme b(out) + ADP + phosphate + H(+). Part of the ABC transporter complex CcmAB involved in the biogenesis of c-type cytochromes; once thought to export heme, this seems not to be the case, but its exact role is uncertain. Responsible for energy coupling to the transport system. This is Cytochrome c biogenesis ATP-binding export protein CcmA 2 from Cupriavidus metallidurans (strain ATCC 43123 / DSM 2839 / NBRC 102507 / CH34) (Ralstonia metallidurans).